A 597-amino-acid chain; its full sequence is Elongation factor 4 (597 aa).

The tr-type G domain occupies 2-184; sequence DHIRNFSIIA…SLIAKVPPPK (183 aa). GTP contacts are provided by residues 14–19 and 131–134; these read DHGKST and NKID.

This sequence belongs to the TRAFAC class translation factor GTPase superfamily. Classic translation factor GTPase family. LepA subfamily.

Its subcellular location is the cell inner membrane. The enzyme catalyses GTP + H2O = GDP + phosphate + H(+). Its function is as follows. Required for accurate and efficient protein synthesis under certain stress conditions. May act as a fidelity factor of the translation reaction, by catalyzing a one-codon backward translocation of tRNAs on improperly translocated ribosomes. Back-translocation proceeds from a post-translocation (POST) complex to a pre-translocation (PRE) complex, thus giving elongation factor G a second chance to translocate the tRNAs correctly. Binds to ribosomes in a GTP-dependent manner. In Burkholderia cenocepacia (strain HI2424), this protein is Elongation factor 4.